Here is a 118-residue protein sequence, read N- to C-terminus: Large ribosomal subunit protein bL19 (118 aa).

The protein belongs to the bacterial ribosomal protein bL19 family.

In terms of biological role, this protein is located at the 30S-50S ribosomal subunit interface and may play a role in the structure and function of the aminoacyl-tRNA binding site. The polypeptide is Large ribosomal subunit protein bL19 (Campylobacter jejuni subsp. jejuni serotype O:2 (strain ATCC 700819 / NCTC 11168)).